The primary structure comprises 276 residues: Undecaprenyl-diphosphatase (276 aa).

7 helical membrane passes run 12–34, 43–63, 85–105, 108–128, 185–205, 218–238, and 249–269; these read LGIVEGLTEFLPISSTGHLIVVG, TATAFKIIIQLGAILAVMWEF, FNLLLAFIPAVVFGLAFADLI, WLFNPITVATALIVGGIIMLW, TEFSFFLAMPTMIAATVYSLF, IFAIGFVSTFIVAMITVRALL, and FAWYRIAFGLVILATWQLHLI.

This sequence belongs to the UppP family.

The protein localises to the cell inner membrane. The enzyme catalyses di-trans,octa-cis-undecaprenyl diphosphate + H2O = di-trans,octa-cis-undecaprenyl phosphate + phosphate + H(+). Catalyzes the dephosphorylation of undecaprenyl diphosphate (UPP). Confers resistance to bacitracin. The chain is Undecaprenyl-diphosphatase from Ectopseudomonas mendocina (strain ymp) (Pseudomonas mendocina).